The sequence spans 388 residues: Protein FAM199X (388 aa).

A compositionally biased stretch (low complexity) spans 288–312 (SMVSSASSSGSSVGNSASNSSANMS). The disordered stretch occupies residues 288–358 (SMVSSASSSG…QLKEQRQARK (71 aa)). Phosphoserine is present on residues serine 316 and serine 321. Over residues 330 to 349 (DSKKRSKQRKLQQKAFRKRQ) the composition is skewed to basic residues.

It belongs to the FAM199 family.

This chain is Protein FAM199X (Fam199x), found in Mus musculus (Mouse).